A 570-amino-acid chain; its full sequence is Frizzled-2 (570 aa).

A signal peptide spans 1 to 28 (MRARSALPRSALPRLLLPLLLLPAAGPA). Residues 29–252 (QFHGEKGISI…QEETRFARLW (224 aa)) are Extracellular-facing. The FZ domain occupies 39–158 (PDHGFCQPIS…HGAEQICVGQ (120 aa)). 5 disulfides stabilise this stretch: Cys-44/Cys-105, Cys-52/Cys-98, Cys-89/Cys-126, Cys-115/Cys-155, and Cys-119/Cys-143. Residue Asn-58 is glycosylated (N-linked (GlcNAc...) asparagine). Residue Asn-159 is glycosylated (N-linked (GlcNAc...) asparagine). Residues 166-194 (PALLTTAPPSGLQPGAGGTPGGPGGGGSP) form a disordered region. Gly residues predominate over residues 179–193 (PGAGGTPGGPGGGGS). A helical transmembrane segment spans residues 253–273 (ILTWSVLCCASTFFTVTTYLV). Residues 274–284 (DMQRFRYPERP) lie on the Cytoplasmic side of the membrane. Residues 285 to 305 (IIFLSGCYTMVSVAYIAGFVL) form a helical membrane-spanning segment. The Extracellular portion of the chain corresponds to 306-332 (QERVVCNERFSEDGYRTVVQGTKKEGC). A helical transmembrane segment spans residues 333 to 353 (TILFMMLYFFSMASSIWWVIL). The Cytoplasmic segment spans residues 354–375 (SLTWFLAAGMKWGHEAIEANSQ). Residues 376 to 396 (YFHLAAWAVPAVKTITILAMG) form a helical membrane-spanning segment. The Extracellular portion of the chain corresponds to 397–419 (QIDGDLLSGVCFVGLNSLDPLRG). The helical transmembrane segment at 420-440 (FVLAPLFVYLFIGTSFLLAGF) threads the bilayer. Topologically, residues 441–466 (VSLFRIRTIMKHDGTKTEKLERLMVR) are cytoplasmic. The chain crosses the membrane as a helical span at residues 467–487 (IGVFSVLYTVPATIVIACYFY). Residues 488–524 (EQAFREHWERSWVSQHCKSLAIPCPAHYTPRMSPDFT) are Extracellular-facing. The helical transmembrane segment at 525-545 (VYMIKYLMTLIVGITSGFWIW) threads the bilayer. The Cytoplasmic portion of the chain corresponds to 546–570 (SGKTLHSWRKFYTRLTNSRHGETTV). A Lys-Thr-X-X-X-Trp motif, mediates interaction with the PDZ domain of Dvl family members motif is present at residues 548–553 (KTLHSW). The PDZ-binding signature appears at 568–570 (TTV).

It belongs to the G-protein coupled receptor Fz/Smo family. In terms of processing, ubiquitinated by ZNRF3, leading to its degradation by the proteasome. Expressed in embryonic and adult heart, lung, chondrocytes and brain. Also expressed in the developing gastrointestinal tract (strongest in foregut), much weaker expression in the adult. No expression in fetal liver and adult spleen. Up-regulated in esophageal squamous cell carcinomas.

It is found in the membrane. The protein resides in the cell membrane. Functionally, receptor for Wnt proteins. Most of frizzled receptors are coupled to the beta-catenin canonical signaling pathway, which leads to the activation of disheveled proteins, inhibition of GSK-3 kinase, nuclear accumulation of beta-catenin and activation of Wnt target genes. A second signaling pathway involving PKC and calcium fluxes has been seen for some family members, but it is not yet clear if it represents a distinct pathway or if it can be integrated in the canonical pathway, as PKC seems to be required for Wnt-mediated inactivation of GSK-3 kinase. Both pathways seem to involve interactions with G-proteins. May be involved in transduction and intercellular transmission of polarity information during tissue morphogenesis and/or in differentiated tissues. This Mus musculus (Mouse) protein is Frizzled-2 (Fzd2).